A 586-amino-acid chain; its full sequence is Eukaryotic translation initiation factor 3 subunit D (586 aa).

Disordered regions lie at residues 16 to 37 (EDSWGPATPSDNMLEGVPYAPF) and 104 to 176 (KRTF…REPS). The span at 108 to 131 (GRGGGTVFRGRAQRGGAGQRGGRA) shows a compositional bias: gly residues. A compositionally biased stretch (basic and acidic residues) spans 162 to 174 (GWKDYDKPQRTRE). The segment at 301-315 (SIDLVTVNENAADAP) is RNA gate. Residues 563–586 (ANTFEEDDEAADEQEEKATEESEE) form a disordered region. Positions 566–577 (FEEDDEAADEQE) are enriched in acidic residues.

Belongs to the eIF-3 subunit D family. As to quaternary structure, component of the eukaryotic translation initiation factor 3 (eIF-3) complex.

It localises to the cytoplasm. MRNA cap-binding component of the eukaryotic translation initiation factor 3 (eIF-3) complex, which is involved in protein synthesis of a specialized repertoire of mRNAs and, together with other initiation factors, stimulates binding of mRNA and methionyl-tRNAi to the 40S ribosome. The eIF-3 complex specifically targets and initiates translation of a subset of mRNAs involved in cell proliferation. In the eIF-3 complex, eif3d specifically recognizes and binds the 7-methylguanosine cap of a subset of mRNAs. This chain is Eukaryotic translation initiation factor 3 subunit D, found in Aspergillus clavatus (strain ATCC 1007 / CBS 513.65 / DSM 816 / NCTC 3887 / NRRL 1 / QM 1276 / 107).